A 455-amino-acid polypeptide reads, in one-letter code: CDP-diacylglycerol--serine O-phosphatidyltransferase (455 aa).

PLD phosphodiesterase domains follow at residues 134-160 (VFGVLHVKGFVFDDTVLYSGASINNVY) and 356-383 (GDNTYHLKGVWVDDRYILLTGNNLNPRA).

This sequence belongs to the CDP-alcohol phosphatidyltransferase class-II family. As to quaternary structure, multimeric.

The protein resides in the cytoplasm. It is found in the cell inner membrane. It catalyses the reaction a CDP-1,2-diacyl-sn-glycerol + L-serine = a 1,2-diacyl-sn-glycero-3-phospho-L-serine + CMP + H(+). The sequence is that of CDP-diacylglycerol--serine O-phosphatidyltransferase (pssA) from Haemophilus influenzae (strain ATCC 51907 / DSM 11121 / KW20 / Rd).